The chain runs to 145 residues: Basic phospholipase A2 PC14 (145 aa).

An N-terminal signal peptide occupies residues 1–21 (MYPAHLLLLLAVCVSLLGASA). The propeptide occupies 22-27 (IPPLPL). Intrachain disulfides connect cysteine 38-cysteine 98, cysteine 54-cysteine 144, cysteine 56-cysteine 72, cysteine 71-cysteine 125, cysteine 78-cysteine 118, cysteine 87-cysteine 111, and cysteine 105-cysteine 116. 3 residues coordinate Ca(2+): tyrosine 55, glycine 57, and glycine 59. Histidine 75 is an active-site residue. Ca(2+) is bound at residue aspartate 76. Residue aspartate 119 is part of the active site.

This sequence belongs to the phospholipase A2 family. Group I subfamily. D49 sub-subfamily. The cofactor is Ca(2+).

It localises to the secreted. The catalysed reaction is a 1,2-diacyl-sn-glycero-3-phosphocholine + H2O = a 1-acyl-sn-glycero-3-phosphocholine + a fatty acid + H(+). Functionally, PLA2 catalyzes the calcium-dependent hydrolysis of the 2-acyl groups in 3-sn-phosphoglycerides. The sequence is that of Basic phospholipase A2 PC14 from Laticauda laticaudata (Blue-ringed sea krait).